Reading from the N-terminus, the 203-residue chain is Holliday junction branch migration complex subunit RuvA (203 aa).

The segment at 1 to 62 is domain I; the sequence is MYEYFLGQVT…ENGMSLFGFF (62 aa). Residues 63–141 are domain II; it reads DADEKALFEK…DLNVDVTGQT (79 aa). The segment at 142–148 is flexible linker; that stretch reads ALDVDAP. The tract at residues 149–203 is domain III; that stretch reads AVDGALADALAALEALGYSKADVKKVTKKLETFSQTQGADTNTLLSEGLRLLMKK.

Belongs to the RuvA family. In terms of assembly, homotetramer. Forms an RuvA(8)-RuvB(12)-Holliday junction (HJ) complex. HJ DNA is sandwiched between 2 RuvA tetramers; dsDNA enters through RuvA and exits via RuvB. An RuvB hexamer assembles on each DNA strand where it exits the tetramer. Each RuvB hexamer is contacted by two RuvA subunits (via domain III) on 2 adjacent RuvB subunits; this complex drives branch migration. In the full resolvosome a probable DNA-RuvA(4)-RuvB(12)-RuvC(2) complex forms which resolves the HJ.

Its subcellular location is the cytoplasm. In terms of biological role, the RuvA-RuvB-RuvC complex processes Holliday junction (HJ) DNA during genetic recombination and DNA repair, while the RuvA-RuvB complex plays an important role in the rescue of blocked DNA replication forks via replication fork reversal (RFR). RuvA specifically binds to HJ cruciform DNA, conferring on it an open structure. The RuvB hexamer acts as an ATP-dependent pump, pulling dsDNA into and through the RuvAB complex. HJ branch migration allows RuvC to scan DNA until it finds its consensus sequence, where it cleaves and resolves the cruciform DNA. This Lactiplantibacillus plantarum (strain ATCC BAA-793 / NCIMB 8826 / WCFS1) (Lactobacillus plantarum) protein is Holliday junction branch migration complex subunit RuvA.